A 263-amino-acid chain; its full sequence is Hydroxyethylthiazole kinase (263 aa).

Methionine 39 serves as a coordination point for substrate. 2 residues coordinate ATP: lysine 115 and threonine 160. Residue glycine 187 participates in substrate binding.

This sequence belongs to the Thz kinase family. Mg(2+) serves as cofactor.

The catalysed reaction is 5-(2-hydroxyethyl)-4-methylthiazole + ATP = 4-methyl-5-(2-phosphooxyethyl)-thiazole + ADP + H(+). It functions in the pathway cofactor biosynthesis; thiamine diphosphate biosynthesis; 4-methyl-5-(2-phosphoethyl)-thiazole from 5-(2-hydroxyethyl)-4-methylthiazole: step 1/1. Functionally, catalyzes the phosphorylation of the hydroxyl group of 4-methyl-5-beta-hydroxyethylthiazole (THZ). The chain is Hydroxyethylthiazole kinase from Staphylococcus saprophyticus subsp. saprophyticus (strain ATCC 15305 / DSM 20229 / NCIMB 8711 / NCTC 7292 / S-41).